The chain runs to 121 residues: NADH-quinone oxidoreductase subunit 7 (121 aa).

3 helical membrane-spanning segments follow: residues Ile11 to Val31, Leu65 to Val85, and Val93 to Trp113.

This sequence belongs to the complex I subunit 3 family. NDH-1 is composed of at least 14 different subunits, Nqo1 to Nqo14. The complex has a L-shaped structure, with the hydrophobic arm (subunits Nqo7, Nqo8, Nqo10 to Nqo14) embedded in the inner membrane and the hydrophilic peripheral arm (subunits Nqo1 to Nqo6, Nqo9) protruding into the bacterial cytoplasm. The hydrophilic domain contains all the redox centers.

It is found in the cell inner membrane. The enzyme catalyses a quinone + NADH + 5 H(+)(in) = a quinol + NAD(+) + 4 H(+)(out). NDH-1 shuttles electrons from NADH, via FMN and iron-sulfur (Fe-S) centers, to quinones in the respiratory chain. The immediate electron acceptor for the enzyme in this species is believed to be ubiquinone. Couples the redox reaction to proton translocation (for every two electrons transferred, four hydrogen ions are translocated across the cytoplasmic membrane), and thus conserves the redox energy in a proton gradient. The polypeptide is NADH-quinone oxidoreductase subunit 7 (nqo7) (Paracoccus denitrificans).